A 1349-amino-acid polypeptide reads, in one-letter code: Periaxin (1349 aa).

Ser-7 bears the Phosphoserine mark. One can recognise a PDZ domain in the interval 16–99; it reads LVEIIVETEA…YKVSFCLKRT (84 aa). The short motif at 70 to 84 is the Nuclear export signal element; sequence VFFENFKYEDALRLL. Ser-133 is modified (phosphoserine). 41 consecutive repeat copies span residues 402-406, 410-414, 418-422, 426-430, 431-435, 436-440, 444-448, 452-456, 457-461, 462-466, 467-471, 472-476, 477-481, 485-489, 493-497, 501-505, 506-510, 514-518, 519-523, 524-528, 532-536, 537-549, 553-557, 558-562, 563-567, 571-575, 576-580, 589-593, 594-598, 599-603, 612-616, 617-621, 622-626, 630-634, 635-639, 643-647, 648-652, 653-657, 661-665, 669-673, and 674-678. The segment at 402 to 678 is 41 X 5 AA approximate tandem repeats of [LVMGIE]-[PSM]-[EDKA]-[LIVMA]-[AQKHPRT]; that may have a tripeptide spacer of [ALKD]-[IPV]-[KPH]; it reads PPEVKVPKGP…APEVKLPKAP (277 aa). 2 positions are modified to phosphoserine: Ser-794 and Ser-974. The segment covering 1207–1218 has biased composition (basic and acidic residues); it reads AKEGAEEGEKAK. The segment at 1207–1349 is disordered; the sequence is AKEGAEEGEK…RMEGAQAAVI (143 aa). The span at 1232–1242 shows a compositional bias: low complexity; the sequence is SEAVSGEGSPS. Phosphoserine occurs at positions 1236, 1240, 1242, 1289, 1295, and 1327.

This sequence belongs to the periaxin family. Homodimer (via PDZ domain). Interacts with SCN10A. Found in a complex with SCN10A. Interacts with DRP2. Identified in a dystroglycan complex that contains at least PRX, DRP2, UTRN, DMD and DAG1. Detected in a complex composed of at least EZR, AHNAK, PPL and PRX. Identified in a complex with EZR, AHNAK, BFSP1, BFSP2, ANK2, PLEC, VIM and spectrin. Detected in eye lens (at protein level).

The protein localises to the nucleus. The protein resides in the cytoplasm. It is found in the cell membrane. Its subcellular location is the cell junction. It localises to the adherens junction. In terms of biological role, scaffolding protein that functions as part of a dystroglycan complex in Schwann cells, and as part of EZR and AHNAK-containing complexes in eye lens fiber cells. Required for the maintenance of the peripheral myelin sheath that is essential for normal transmission of nerve impulses and normal perception of sensory stimuli. Required for normal transport of MBP mRNA from the perinuclear to the paranodal regions. Required for normal remyelination after nerve injury. Required for normal elongation of Schwann cells and normal length of the internodes between the nodes of Ranvier. The demyelinated nodes of Ranvier permit saltatory transmission of nerve impulses; shorter internodes cause slower transmission of nerve impulses. Required for the formation of appositions between the abaxonal surface of the myelin sheath and the Schwann cell plasma membrane; the Schwann cell cytoplasm is restricted to regions between these appositions. Required for the formation of Cajal bands and of Schmidt-Lanterman incisures that correspond to short, cytoplasm-filled regions on myelinated nerves. Recruits DRP2 to the Schwann cell plasma membrane. Required for normal protein composition of the eye lens fiber cell plasma membrane and normal eye lens fiber cell morphology. The sequence is that of Periaxin (PRX) from Bos taurus (Bovine).